Reading from the N-terminus, the 1448-residue chain is Glutamate receptor ionotropic, NMDA 2B (1448 aa).

Residues 1–24 (MRPTEACCYLKISLIILFYMGCYA) form the signal peptide. The Extracellular portion of the chain corresponds to 25-554 (QKHPNMDIAV…SAFLEPFSAD (530 aa)). Cys-81 and Cys-316 are disulfide-bonded. His-122 and Glu-279 together coordinate Zn(2+). Residue Asn-336 is glycosylated (N-linked (GlcNAc...) asparagine). Cystine bridges form between Cys-426–Cys-453 and Cys-433–Cys-454. The L-glutamate site is built by Thr-511 and Arg-516. Residues 555–573 (VWVMMFVMLLIVSAVAVFV) form a helical membrane-spanning segment. Over 574–600 (FEYFSPVGYNRCLADGREPGGPSFTIG) the chain is Cytoplasmic. The discontinuously helical intramembrane region spans 601–620 (KAIWLLWGLVFNNSVPVQNP). Residues 601 to 620 (KAIWLLWGLVFNNSVPVQNP) form a pore-forming region. Over 621 to 627 (KGTTSKI) the chain is Cytoplasmic. The chain crosses the membrane as a helical span at residues 628-643 (MVSVWAFFAVIFLASY). Topologically, residues 644–819 (TANLAAFMIQ…LDIDNMAGVF (176 aa)) are extracellular. N-linked (GlcNAc...) asparagine glycosylation is present at Asn-685. L-glutamate contacts are provided by residues 687-688 (ST) and Asp-729. Cys-743 and Cys-798 are joined by a disulfide. A helical transmembrane segment spans residues 820–839 (YMLAAAMALSLITFIMEHLF). The Cytoplasmic segment spans residues 840 to 1448 (FWQLRHCFMG…EKLSSIESDV (609 aa)). Positions 1254-1265 (APNSKYPQSPNG) are enriched in polar residues. Residues 1254–1277 (APNSKYPQSPNGKAQKRNRSKLHR) are disordered. Basic residues predominate over residues 1267–1277 (AQKRNRSKLHR).

This sequence belongs to the glutamate-gated ion channel (TC 1.A.10.1) family. NR2B/GRIN2B subfamily. Heterotetramer. Forms heterotetrameric channels composed of two GluN1/zeta subunits (GRIN1), and two identical GluN2/epsilon subunits (GRIN2A, GRIN2B, GRIN2C or GRIN2D) or GluN3 subunits (GRIN3A or GRIN3B) (in vitro). In vivo, the subunit composition may depend on the expression levels of the different subunits. Detected in oocytes.

The protein localises to the cell membrane. The protein resides in the postsynaptic cell membrane. It carries out the reaction Ca(2+)(in) = Ca(2+)(out). The catalysed reaction is Na(+)(in) = Na(+)(out). It catalyses the reaction K(+)(in) = K(+)(out). In terms of biological role, component of N-methyl-D-aspartate (NMDA) receptors (NMDARs) that function as heterotetrameric, ligand-gated cation channels with high calcium permeability and voltage-dependent block by Mg(2+). Channel activation requires binding of the neurotransmitter L-glutamate to the GluN2 subunit, glycine binding to the GluN1 subunit, plus membrane depolarization to eliminate channel inhibition by Mg(2+). NMDARs mediate simultaneously the potasium efflux and the influx of calcium and sodium. Each GluN2 subunit confers differential attributes to channel properties, including activation, deactivation and desensitization kinetics, pH sensitivity, Ca2(+) permeability, and binding to allosteric modulators. The sequence is that of Glutamate receptor ionotropic, NMDA 2B from Xenopus laevis (African clawed frog).